An 85-amino-acid chain; its full sequence is Small ribosomal subunit protein uS17 (85 aa).

It belongs to the universal ribosomal protein uS17 family. As to quaternary structure, part of the 30S ribosomal subunit.

Functionally, one of the primary rRNA binding proteins, it binds specifically to the 5'-end of 16S ribosomal RNA. The protein is Small ribosomal subunit protein uS17 of Agathobacter rectalis (strain ATCC 33656 / DSM 3377 / JCM 17463 / KCTC 5835 / VPI 0990) (Eubacterium rectale).